A 105-amino-acid polypeptide reads, in one-letter code: Nitrogenase-stabilizing/protective protein NifW (105 aa).

The protein belongs to the NifW family. As to quaternary structure, homotrimer; associates with NifD.

Functionally, may protect the nitrogenase Fe-Mo protein from oxidative damage. This Rhodospirillum centenum (strain ATCC 51521 / SW) protein is Nitrogenase-stabilizing/protective protein NifW.